A 192-amino-acid chain; its full sequence is Hydrophobin-like protein rodD (192 aa).

3 cysteine pairs are disulfide-bonded: Cys-45/Cys-106, Cys-50/Cys-99, and Cys-107/Cys-112.

It belongs to the fungal hydrophobin family. In terms of assembly, self-assembles to form functional amyloid fibrils called rodlets. Self-assembly into fibrillar rodlets occurs spontaneously at hydrophobic:hydrophilic interfaces and the rodlets further associate laterally to form amphipathic monolayers.

Its function is as follows. Aerial growth, conidiation, and dispersal of filamentous fungi in the environment rely upon a capability of their secreting small amphipathic proteins called hydrophobins (HPBs) with low sequence identity. Class I can self-assemble into an outermost layer of rodlet bundles on aerial cell surfaces, conferring cellular hydrophobicity that supports fungal growth, development and dispersal; whereas Class II form highly ordered films at water-air interfaces through intermolecular interactions but contribute nothing to the rodlet structure. RodD is a an hydrophobin-like protein that, unlike rodA, is not required for rodlet formation. This chain is Hydrophobin-like protein rodD, found in Aspergillus fumigatus (strain ATCC MYA-4609 / CBS 101355 / FGSC A1100 / Af293) (Neosartorya fumigata).